The chain runs to 298 residues: Cyclin-dependent kinase 2 (298 aa).

An N-acetylmethionine modification is found at methionine 1. Residues 4 to 286 form the Protein kinase domain; that stretch reads FQKVEKIGEG…AKAALAHPFF (283 aa). Lysine 6 is modified (N6-acetyllysine). Residue 10 to 18 coordinates ATP; the sequence is IGEGTYGVV. Threonine 14 is modified (phosphothreonine). Residue tyrosine 15 is modified to Phosphotyrosine; by WEE1. Tyrosine 19 carries the post-translational modification Phosphotyrosine. ATP contacts are provided by residues lysine 33, 81-83, and aspartate 86; that span reads EFL. Catalysis depends on aspartate 127, which acts as the Proton acceptor. ATP is bound by residues 129-132 and aspartate 145; that span reads KPQN. Mg(2+) is bound by residues asparagine 132 and aspartate 145. Threonine 160 is subject to Phosphothreonine; by CAK and CCRK.

Belongs to the protein kinase superfamily. CMGC Ser/Thr protein kinase family. CDC2/CDKX subfamily. In terms of assembly, found in a complex with CABLES1, CCNA1 and CCNE1. Interacts with CABLES1. Interacts with UHRF2. Part of a complex consisting of UHRF2, CDK2 and CCNE1. Interacts with the Speedy/Ringo proteins SPDYA and SPDYC. Interaction with SPDYA promotes kinase activation via a conformation change that alleviates obstruction of the substrate-binding cleft by the T-loop. Found in a complex with both SPDYA and CDKN1B/KIP1. Binds to RB1. Binds to CDK7. Binding to CDKN1A (p21) leads to CDK2/cyclin E inactivation at the G1-S phase DNA damage checkpoint, thereby arresting cells at the G1-S transition during DNA repair. Associated with PTPN6 and beta-catenin/CTNNB1. Interacts with CACUL1. May interact with CEP63. Interacts with ANKRD17. Interacts with CEBPA (when phosphorylated). Forms a ternary complex with CCNA2 and CDKN1B; CDKN1B inhibits the kinase activity of CDK2 through conformational rearrangements. Interacts with cyclins A, B1, B3, D, or E. Interacts with CDK2AP2. The cofactor is Mg(2+). Post-translationally, phosphorylated at Thr-160 by CDK7 in a CAK complex. Phosphorylation at Thr-160 promotes kinase activity, whereas phosphorylation at Tyr-15 by WEE1 reduces slightly kinase activity. Phosphorylated on Thr-14 and Tyr-15 during S and G2 phases before being dephosphorylated by CDC25A. In terms of processing, nitrosylated after treatment with nitric oxide (DETA-NO).

It localises to the cytoplasm. It is found in the cytoskeleton. Its subcellular location is the microtubule organizing center. The protein resides in the centrosome. The protein localises to the nucleus. It localises to the cajal body. It is found in the endosome. It carries out the reaction L-seryl-[protein] + ATP = O-phospho-L-seryl-[protein] + ADP + H(+). The enzyme catalyses L-threonyl-[protein] + ATP = O-phospho-L-threonyl-[protein] + ADP + H(+). Phosphorylation at Thr-14 or Tyr-15 inactivates the enzyme, while phosphorylation at Thr-160 activates it. Stimulated by MYC. Inactivated by CDKN1A (p21). Serine/threonine-protein kinase involved in the control of the cell cycle; essential for meiosis, but dispensable for mitosis. Phosphorylates CABLES1, CTNNB1, CDK2AP2, ERCC6, NBN, USP37, p53/TP53, NPM1, CDK7, RB1, BRCA2, MYC, NPAT, EZH2. Triggers duplication of centrosomes and DNA. Acts at the G1-S transition to promote the E2F transcriptional program and the initiation of DNA synthesis, and modulates G2 progression; controls the timing of entry into mitosis/meiosis by controlling the subsequent activation of cyclin B/CDK1 by phosphorylation, and coordinates the activation of cyclin B/CDK1 at the centrosome and in the nucleus. Crucial role in orchestrating a fine balance between cellular proliferation, cell death, and DNA repair in embryonic stem cells (ESCs). Activity of CDK2 is maximal during S phase and G2; activated by interaction with cyclin E during the early stages of DNA synthesis to permit G1-S transition, and subsequently activated by cyclin A2 (cyclin A1 in germ cells) during the late stages of DNA replication to drive the transition from S phase to mitosis, the G2 phase. EZH2 phosphorylation promotes H3K27me3 maintenance and epigenetic gene silencing. Cyclin E/CDK2 prevents oxidative stress-mediated Ras-induced senescence by phosphorylating MYC. Involved in G1-S phase DNA damage checkpoint that prevents cells with damaged DNA from initiating mitosis; regulates homologous recombination-dependent repair by phosphorylating BRCA2, this phosphorylation is low in S phase when recombination is active, but increases as cells progress towards mitosis. In response to DNA damage, double-strand break repair by homologous recombination a reduction of CDK2-mediated BRCA2 phosphorylation. Involved in regulation of telomere repair by mediating phosphorylation of NBN. Phosphorylation of RB1 disturbs its interaction with E2F1. NPM1 phosphorylation by cyclin E/CDK2 promotes its dissociation from unduplicated centrosomes, thus initiating centrosome duplication. Cyclin E/CDK2-mediated phosphorylation of NPAT at G1-S transition and until prophase stimulates the NPAT-mediated activation of histone gene transcription during S phase. Required for vitamin D-mediated growth inhibition by being itself inactivated. Involved in the nitric oxide- (NO) mediated signaling in a nitrosylation/activation-dependent manner. USP37 is activated by phosphorylation and thus triggers G1-S transition. CTNNB1 phosphorylation regulates insulin internalization. Phosphorylates FOXP3 and negatively regulates its transcriptional activity and protein stability. Phosphorylates ERCC6 which is essential for its chromatin remodeling activity at DNA double-strand breaks. Acts as a regulator of the phosphatidylinositol 3-kinase/protein kinase B signal transduction by mediating phosphorylation of the C-terminus of protein kinase B (PKB/AKT1 and PKB/AKT2), promoting its activation. This is Cyclin-dependent kinase 2 (Cdk2) from Rattus norvegicus (Rat).